The primary structure comprises 380 residues: Cytochrome b (380 aa).

Helical transmembrane passes span 34-54 (FGSLLGICLMTQILTGLLLAM), 78-99 (WLIRNLHANGASFFFICIYLHI), 114-134 (WNTGIILLLTLMATAFVGYVL), and 179-199 (FFALHFLLPFAIAGLTLIHLT). Histidine 84 and histidine 98 together coordinate heme b. Positions 183 and 197 each coordinate heme b. Position 202 (histidine 202) interacts with a ubiquinone. Helical transmembrane passes span 227–247 (LKDILGFTLMFLPLTSLALFS), 289–309 (LGGVLALAASVLILFLSPFLH), 321–341 (LSQLLFWILVTNLFILTWVGS), and 348–368 (FIIIGQLASITYFTILLILFP).

The protein belongs to the cytochrome b family. As to quaternary structure, the cytochrome bc1 complex contains 11 subunits: 3 respiratory subunits (MT-CYB, CYC1 and UQCRFS1), 2 core proteins (UQCRC1 and UQCRC2) and 6 low-molecular weight proteins (UQCRH/QCR6, UQCRB/QCR7, UQCRQ/QCR8, UQCR10/QCR9, UQCR11/QCR10 and a cleavage product of UQCRFS1). This cytochrome bc1 complex then forms a dimer. Heme b is required as a cofactor.

It is found in the mitochondrion inner membrane. In terms of biological role, component of the ubiquinol-cytochrome c reductase complex (complex III or cytochrome b-c1 complex) that is part of the mitochondrial respiratory chain. The b-c1 complex mediates electron transfer from ubiquinol to cytochrome c. Contributes to the generation of a proton gradient across the mitochondrial membrane that is then used for ATP synthesis. The polypeptide is Cytochrome b (MT-CYB) (Daption capense (Cape petrel)).